Reading from the N-terminus, the 245-residue chain is Probable phosphatase ECA2529 (245 aa).

Zn(2+) contacts are provided by His7, His9, His15, His40, Glu73, His101, His131, Asp192, and His194.

It belongs to the PHP family. In terms of assembly, homotrimer. Zn(2+) is required as a cofactor.

The polypeptide is Probable phosphatase ECA2529 (Pectobacterium atrosepticum (strain SCRI 1043 / ATCC BAA-672) (Erwinia carotovora subsp. atroseptica)).